The sequence spans 76 residues: MQLVLAAKYIGAGISTIGLLGAGIGIAIVFSALIQGVSRNPSLKDTLFPFAILGFALSEATGLFCLMISFLLLYAV.

2 helical membrane-spanning segments follow: residues 10–30 (IGAGISTIGLLGAGIGIAIVF) and 52–72 (ILGFALSEATGLFCLMISFLL).

The protein belongs to the ATPase C chain family. In terms of assembly, F-type ATPases have 2 components, CF(1) - the catalytic core - and CF(0) - the membrane proton channel. CF(1) has five subunits: alpha(3), beta(3), gamma(1), delta(1), epsilon(1). CF(0) has three main subunits: a, b and c.

It is found in the mitochondrion membrane. Functionally, mitochondrial membrane ATP synthase (F(1)F(0) ATP synthase or Complex V) produces ATP from ADP in the presence of a proton gradient across the membrane which is generated by electron transport complexes of the respiratory chain. F-type ATPases consist of two structural domains, F(1) - containing the extramembraneous catalytic core and F(0) - containing the membrane proton channel, linked together by a central stalk and a peripheral stalk. During catalysis, ATP synthesis in the catalytic domain of F(1) is coupled via a rotary mechanism of the central stalk subunits to proton translocation. Part of the complex F(0) domain. A homomeric c-ring of probably 10 subunits is part of the complex rotary element. This chain is ATP synthase subunit 9, mitochondrial (ATP9), found in Kluyveromyces lactis (strain ATCC 8585 / CBS 2359 / DSM 70799 / NBRC 1267 / NRRL Y-1140 / WM37) (Yeast).